Reading from the N-terminus, the 262-residue chain is Phosphonates import ATP-binding protein PhnC (262 aa).

The 249-residue stretch at 5-253 (IRVEKLAKTF…RFDHLYRSIN (249 aa)) folds into the ABC transporter domain. Position 37-44 (37-44 (GPSGSGKS)) interacts with ATP.

Belongs to the ABC transporter superfamily. Phosphonates importer (TC 3.A.1.9.1) family. The complex is composed of two ATP-binding proteins (PhnC), two transmembrane proteins (PhnE) and a solute-binding protein (PhnD).

The protein resides in the cell inner membrane. It carries out the reaction phosphonate(out) + ATP + H2O = phosphonate(in) + ADP + phosphate + H(+). Part of the ABC transporter complex PhnCDE involved in phosphonates import. Responsible for energy coupling to the transport system. The sequence is that of Phosphonates import ATP-binding protein PhnC from Escherichia coli (strain UTI89 / UPEC).